The following is a 161-amino-acid chain: N5-carboxyaminoimidazole ribonucleotide mutase (161 aa).

Residues serine 9, aspartate 12, and arginine 39 each coordinate substrate.

The protein belongs to the AIR carboxylase family. Class I subfamily.

It carries out the reaction 5-carboxyamino-1-(5-phospho-D-ribosyl)imidazole + H(+) = 5-amino-1-(5-phospho-D-ribosyl)imidazole-4-carboxylate. It participates in purine metabolism; IMP biosynthesis via de novo pathway; 5-amino-1-(5-phospho-D-ribosyl)imidazole-4-carboxylate from 5-amino-1-(5-phospho-D-ribosyl)imidazole (N5-CAIR route): step 2/2. Catalyzes the conversion of N5-carboxyaminoimidazole ribonucleotide (N5-CAIR) to 4-carboxy-5-aminoimidazole ribonucleotide (CAIR). This Vibrio vulnificus (strain CMCP6) protein is N5-carboxyaminoimidazole ribonucleotide mutase.